Here is a 117-residue protein sequence, read N- to C-terminus: Immunoglobulin heavy variable 1-46 (117 aa).

The N-terminal stretch at 1–19 is a signal peptide; the sequence is MDWTWRVFCLLAVAPGAHS. The segment at 20–44 is framework-1; the sequence is QVQLVQSGAEVKKPGASVKVSCKAS. Residues 20–117 form the Ig-like domain; sequence QVQLVQSGAE…EDTAVYYCAR (98 aa). Residues Cys-41 and Cys-115 are joined by a disulfide bond. The tract at residues 45 to 52 is complementarity-determining-1; sequence GYTFTSYY. Residues 53–69 form a framework-2 region; that stretch reads MHWVRQAPGQGLEWMGI. The complementarity-determining-2 stretch occupies residues 70–77; sequence INPSGGST. Residues 78–115 form a framework-3 region; that stretch reads SYAQKFQGRVTMTRDTSTSTVYMELSSLRSEDTAVYYC. Positions 116-117 are complementarity-determining-3; that stretch reads AR.

As to quaternary structure, immunoglobulins are composed of two identical heavy chains and two identical light chains; disulfide-linked.

The protein resides in the secreted. It localises to the cell membrane. Functionally, v region of the variable domain of immunoglobulin heavy chains that participates in the antigen recognition. Immunoglobulins, also known as antibodies, are membrane-bound or secreted glycoproteins produced by B lymphocytes. In the recognition phase of humoral immunity, the membrane-bound immunoglobulins serve as receptors which, upon binding of a specific antigen, trigger the clonal expansion and differentiation of B lymphocytes into immunoglobulins-secreting plasma cells. Secreted immunoglobulins mediate the effector phase of humoral immunity, which results in the elimination of bound antigens. The antigen binding site is formed by the variable domain of one heavy chain, together with that of its associated light chain. Thus, each immunoglobulin has two antigen binding sites with remarkable affinity for a particular antigen. The variable domains are assembled by a process called V-(D)-J rearrangement and can then be subjected to somatic hypermutations which, after exposure to antigen and selection, allow affinity maturation for a particular antigen. This chain is Immunoglobulin heavy variable 1-46, found in Homo sapiens (Human).